The sequence spans 332 residues: Melanocortin receptor 4 (332 aa).

At 1-43 the chain is on the extracellular side; it reads MVNSTHRGMHASLHLWNRSSHRLHSNASESLGKGYSDGGCYEQ. N-linked (GlcNAc...) asparagine glycosylation is found at asparagine 3, asparagine 17, and asparagine 26. Intrachain disulfides connect cysteine 40–cysteine 279 and cysteine 271–cysteine 277. Residues 44 to 69 form a helical membrane-spanning segment; it reads LFVSPEVFVTLGVISLLENILVIVAI. Residues 70 to 81 lie on the Cytoplasmic side of the membrane; that stretch reads AKNKNLHSPMYF. A helical transmembrane segment spans residues 82–106; that stretch reads FICSLAVADMLVSVSNGSETIVITL. Residues glutamate 100, aspartate 122, and aspartate 126 each contribute to the Ca(2+) site. Over 107-123 the chain is Extracellular; sequence LNSTDTDTQSFTVNIDN. Residues 124–145 traverse the membrane as a helical segment; sequence VIDSVICSSLLASICSLLSIAV. Residues 146-165 lie on the Cytoplasmic side of the membrane; the sequence is DRYFTIFYALQYHNIMTVKR. The helical transmembrane segment at 166–186 threads the bilayer; that stretch reads VRIIISCIWAACTVSGILFII. Residues 187–191 are Extracellular-facing; sequence YSDSS. The helical transmembrane segment at 192 to 215 threads the bilayer; that stretch reads AVIICLITMFFTMLALMASLYVHM. The Cytoplasmic portion of the chain corresponds to 216–248; it reads FLMARLHIKRIAVLPGTGAIRQGANMKGAITLT. A helical transmembrane segment spans residues 249-271; sequence ILIGVFVVCWAPFFLHLIFYISC. Over 272–280 the chain is Extracellular; sequence PQNPYCVCF. Residues 281-304 traverse the membrane as a helical segment; sequence MSHFNLYLILIMCNSVIDPLIYAL. Residues 305–332 are Cytoplasmic-facing; sequence RSQELRKTFKEIICCYPLGGLCDLSSRY. Residue cysteine 318 is the site of S-palmitoyl cysteine attachment.

The protein belongs to the G-protein coupled receptor 1 family. Homodimer; disulfide-linked, also forms higher order oligomers. Interacts with GNAS. Interacts with ATRNL1. Interacts with MGRN1; this interaction competes with GNAS-binding and thus inhibits agonist-induced cAMP production. Interacts with MRAP and MRAP2; these associated factors increase ligand-sensitivity and generation of cAMP.

It localises to the cell membrane. Functionally, hormone receptor that acts as a key component of the leptin-melanocortin pathway at the intersection of homeostatic maintenance of energetic state. Plays a role in regulating food intake: activation by a stimulating hormone such as anorexigenic alpha-melanocyte stimulating hormone (alpha-MSH) inhibits appetite, whereas binding to a natural antagonist like Agouti-related protein/AGRP promotes appetite. G-protein-coupled receptor that activates conventional Galphas signaling leading to induction of anorexogenic signaling in the hypothalamus to result in negative energy balance. Regulates the firing activity of neurons from the hypothalamus by alpha-MSH and AGRP independently of Galphas signaling by ligand-induced coupling of closure of inwardly rectifying potassium channel KCNJ13. In intestinal epithelial cells, plays a role in the inhibition of hepatic glucose production via nesfatin-1/NUCB2 leading to increased cyclic adenosine monophosphate (cAMP) levels and glucagon-like peptide 1 (GLP-1) secretion in the intestinal epithelium. The protein is Melanocortin receptor 4 (MC4R) of Macaca fascicularis (Crab-eating macaque).